A 431-amino-acid chain; its full sequence is MPAIVLIGAQWGDEGKGKATDLLGGRVQWVVRYQGGNNAGHTVVLPTGENFALHLIPSGILTPGVTNVIGNGVVVDPGVLLTELKGLEDRGVDTSNLLISADAHLLMPYHVAIDKVVERWAGSKKIGTTGRGIGPCYQDKIARIGIRVADVLDEQVLAEKIEAALEFKNQVLVKIYNRKALEPAEVLENLLEQAEGFKHRIADARLLLNQALENDEAVLLEGSQGTLLDVDHGTYPFVTSSNPTAGGAAVGSGIGPTRITTVLGILKAYTTRVGSGPFPTELFDEHGAYLAKTGGEVGVTTGRARRCGWFDAVIARYATRVNGITDYFLTKLDVLSSLETVPVCVGYTVDGKRVDEMPMTQSDIARAEPVYEELPGWWEDISGAREFEDLPAKARDYVLRLEELAGAYVSCIGVGPGRDQTIVRRDVLAAR.

Residues 12 to 18 (GDEGKGK) and 40 to 42 (GHT) each bind GTP. Asp-13 serves as the catalytic Proton acceptor. Mg(2+) contacts are provided by Asp-13 and Gly-40. Residues 13–16 (DEGK), 38–41 (NAGH), Thr-129, Arg-143, Gln-224, and Thr-239 each bind IMP. The Proton donor role is filled by His-41. An Isoglutamyl lysine isopeptide (Lys-Gln) (interchain with Q-Cter in protein Pup) cross-link involves residue Lys-292. 299-305 (VTTGRAR) contacts substrate. Arg-303 lines the IMP pocket. Residues Arg-305, 331-333 (KLD), and 413-415 (GVG) contribute to the GTP site.

This sequence belongs to the adenylosuccinate synthetase family. Homodimer. Mg(2+) serves as cofactor.

It localises to the cytoplasm. It carries out the reaction IMP + L-aspartate + GTP = N(6)-(1,2-dicarboxyethyl)-AMP + GDP + phosphate + 2 H(+). The protein operates within purine metabolism; AMP biosynthesis via de novo pathway; AMP from IMP: step 1/2. Plays an important role in the de novo pathway of purine nucleotide biosynthesis. Catalyzes the first committed step in the biosynthesis of AMP from IMP. The polypeptide is Adenylosuccinate synthetase (Mycolicibacterium smegmatis (strain ATCC 700084 / mc(2)155) (Mycobacterium smegmatis)).